Here is a 74-residue protein sequence, read N- to C-terminus: Alpha-elapitoxin-Aa2d (74 aa).

5 disulfides stabilise this stretch: Cys-3–Cys-21, Cys-14–Cys-42, Cys-27–Cys-31, Cys-46–Cys-57, and Cys-58–Cys-63.

It belongs to the three-finger toxin family. Long-chain subfamily. Type II alpha-neurotoxin sub-subfamily. As to expression, expressed by the venom gland.

The protein localises to the secreted. Functionally, binds with high affinity to muscular (alpha-1/CHRNA1) and neuronal (alpha-7/CHRNA7) nicotinic acetylcholine receptor (nAChR) and inhibits acetylcholine from binding to the receptor, thereby impairing neuromuscular and neuronal transmission. The chain is Alpha-elapitoxin-Aa2d from Acanthophis antarcticus (Common death adder).